The primary structure comprises 170 residues: Cathelicidin antimicrobial peptide (170 aa).

Positions 1–30 (MKTQRDGPSLGRWSLVLLLLGLTMPLAVIA) are cleaved as a signal peptide. Residues 31-131 (RVLSYQEAVL…DISCDKDKRK (101 aa)) constitute a propeptide, cathelin-like domain (CLD). 2 disulfide bridges follow: Cys-86–Cys-97 and Cys-108–Cys-125. An active core region spans residues 150 to 162 (LKNIGQRIKDFFG).

Belongs to the cathelicidin family. As to quaternary structure, monomer, homodimer or homotrimer (in vitro). Oligomerizes as tetra- or hexamer in solution (in vitro). In terms of processing, proteolytically cleaved by proteinase PRTN3 into antibacterial peptide LL-37. Proteolytically cleaved by cathepsin CTSG and neutrophil elastase ELANE. Post-translationally, resistant to proteolytic degradation in solution, and when bound to both zwitterionic (mimicking mammalian membranes) and negatively charged membranes (mimicking bacterial membranes). After secretion onto the skin surface, the CAMP gene product is processed by a serine protease-dependent mechanism into multiple novel antimicrobial peptides distinct from and shorter than cathelicidin LL-37. These peptides show enhanced antimicrobial action, acquiring the ability to kill skin pathogens such as S.aureus, E.coli and C.albicans. These peptides have lost the ability to stimulate CXCL8/IL8 release from keratinocytes. The peptides act synergistically, killing bacteria at lower concentrations when present together, and maintain activity at increased salt condition.

The protein localises to the secreted. The protein resides in the vesicle. Its function is as follows. Antimicrobial protein that is an integral component of the innate immune system. Binds to bacterial lipopolysaccharides (LPS). Acts via neutrophil N-formyl peptide receptors to enhance the release of CXCL2. Postsecretory processing generates multiple cathelicidin antimicrobial peptides with various lengths which act as a topical antimicrobial defense in sweat on skin. The unprocessed precursor form, cathelicidin antimicrobial peptide, inhibits the growth of Gram-negative E.coli and E.aerogenes with efficiencies comparable to that of the mature peptide LL-37 (in vitro). Antimicrobial peptide that is an integral component of the innate immune system. Binds to bacterial lipopolysaccharides (LPS). Causes membrane permeabilization by forming transmembrane pores (in vitro). Causes lysis of E.coli. Exhibits antimicrobial activity against Gram-negative bacteria such as P.aeruginosa, S.typhimurium, E.aerogenes, E.coli and P.syringae, Gram-positive bacteria such as L.monocytogenes, S.epidermidis, S.pyogenes and S.aureus, as well as vancomycin-resistant enterococci (in vitro). Exhibits antimicrobial activity against methicillin-resistant S.aureus, P.mirabilis, and C.albicans in low-salt media, but not in media containing 100 mM NaCl (in vitro). Forms chiral supramolecular assemblies with quinolone signal (PQS) molecules of P.aeruginosa, which may lead to interference of bacterial quorum signaling and perturbance of bacterial biofilm formation. May form supramolecular fiber-like assemblies on bacterial membranes. Induces cytokine and chemokine producation as well as TNF/TNFA and CSF2/GMCSF production in normal human keratinocytes. Exhibits hemolytic activity against red blood cells. In terms of biological role, exhibits antimicrobial activity against E.coli and B.megaterium (in vitro). This Ateles fusciceps robustus (Colombian black-faced spider monkey) protein is Cathelicidin antimicrobial peptide.